We begin with the raw amino-acid sequence, 1114 residues long: MKILKPQWVSHGGLSIYSIDIHPDGTRVATGGGDAKIKIWSMAPISLLEAEEDAGIPKLLCSIENAHFHSVNSVKWSKDGKYLASGSDDKLCMIWGLSNNNSLLKNTTENWVCVATLRGHASDISEVSWSPDNKYIATCSFDKSIIIWETNKFQMVSKLEEHKGFVKGLTWDPLGRYLASQSEDKSLIIWRTSDWVVETIVTEPFKHSGNSFFLRPSWTPDGQFIVATHGINNATHTGVLVSRTDWDIGLDLVGHRKAVVVSRCSSKIYKDFKSRDQKFCLILLGGQDSTLSLWSSSSPRSLMVTRSLFDQCIQDISWCSDGYSFVACSTDGTVGYISLDPEEIGGSPIGPEEKQIFFKNYYGDAVTIDKEGNVIYGAAGGNLSSAANSGSHAILPENPDQLAMEESNANGVGSGVSGGGVSGGGGSGSGINNQNGGENHSKTNSTSTLQPTQLAMQNQKQTIMPGGKRRITPIFIGSSSQNITKPQPVAIPLHLQQLQHSSSSLKPTGNEPMETDSSTKTSSPSSSSSSTTTATTITEKTATPTKMTPMVPFGLNKLNGTIDGSNDRFSHPRIKDNNNNHNHHIHHRDTHKSSHHDKSDRDKSDRDDQSTKHTTPNIGGSNSNSNNSSKRRSAEPEPTISISKKKKSSSGSNKQQQQQQQQQQTDQNQNSQFSNNNNNNNMIISTVIPTGFSIPLPTLTNKISKKLIDQPIQASALNNRLFPTMTPNTTTTSGVGGSIIIDVNITEQELQDNTVEYFSVIRYLSFETQLWENRIAGRITLITGNKNWCAATTLDSLLYIFNKNGTIIMSNIVPRNQLSFLESNKTNHLLAITCDGFVCVWNVLKKKVELSNRELPFLKNRDSLTIKHAMVTEESGKPIITFSNGDSFVYSSDVGEWVKITDRLGALSEYNSNDTTNTGILSTLQNNNRINSIINSNITNNISNQQQQQQQPSVSNLLSLSNSESQQQQQLSTSLFLEKQLWLAQVLESSLEYKHWLLIYTKYLTNCCNIVKLTDLCTDLLGPSSTLNDHHHHHHHHNHTTGMSMESNPFSNNSLSIPWESTILGLSKRSLLKEILPIMAGNRTLQRMVGQFKESLNAFSKNILVDPFDTLLNK.

WD repeat units follow at residues 10–50 (SHGG…LLEA), 66–105 (AHFH…SLLK), 119–158 (GHAS…MVSK), 161–200 (EHKG…VETI), 209–251 (GNSF…IGLD), 262–304 (SRCS…SLMV), and 308–347 (LFDQ…IGGS). Disordered regions lie at residues 405–449 (EESN…TSTL) and 499–682 (QHSS…NNNM). Residues 412–429 (VGSGVSGGGVSGGGGSGS) are compositionally biased toward gly residues. The span at 515 to 545 (TDSSTKTSSPSSSSSSTTTATTITEKTATPT) shows a compositional bias: low complexity. Basic and acidic residues predominate over residues 565–578 (SNDRFSHPRIKDNN). Basic residues predominate over residues 581–595 (HNHHIHHRDTHKSSH). Basic and acidic residues predominate over residues 596–611 (HDKSDRDKSDRDDQST). The segment covering 649–681 (SSGSNKQQQQQQQQQQTDQNQNSQFSNNNNNNN) has biased composition (low complexity).

It belongs to the WD repeat HIR1 family.

It is found in the nucleus. Required for the periodic repression of histone gene transcription during the cell cycle. Promotes replication-independent chromatin assembly. This Dictyostelium discoideum (Social amoeba) protein is Protein HIRA (hira).